Consider the following 203-residue polypeptide: Linker for activation of T-cells family member 2 (203 aa).

The Extracellular segment spans residues 1 to 6; that stretch reads MSAELE. The helical; Signal-anchor for type III membrane protein transmembrane segment at 7 to 27 threads the bilayer; sequence LLWPVSGLLLLLLGATAWLCV. Residues Cys-26 and Cys-29 are each lipidated (S-palmitoyl cysteine). Topologically, residues 28–203 are cytoplasmic; that stretch reads HCSRPGVKRN…NGDVAAAENI (176 aa). At Tyr-59 the chain carries Phosphotyrosine. A phosphoserine mark is found at Ser-60 and Ser-95. A phosphotyrosine mark is found at Tyr-139, Tyr-160, and Tyr-192. Residues 171–203 form a disordered region; the sequence is ESKRTMGAPMSLSGSPDEEPDYVNGDVAAAENI.

When phosphorylated, interacts with GRB2. May also interact with SOS1, GAB1 and CBL. Phosphorylated on tyrosines following cross-linking of BCR in B-cells, high affinity IgG receptor (FCGR1) in myeloid cells, or high affinity IgE receptor (FCER1) in mast cells; which induces the recruitment of GRB2. As to expression, strongly expressed in testis. Expressed in heart, spleen and lung. Present in B-cells and mast cells (at protein level).

It localises to the cell membrane. Functionally, involved in FCER1 (high affinity immunoglobulin epsilon receptor)-mediated signaling in mast cells. May also be involved in BCR (B-cell antigen receptor)-mediated signaling in B-cells and FCGR1 (high affinity immunoglobulin gamma Fc receptor I)-mediated signaling in myeloid cells. Couples activation of these receptors and their associated kinases with distal intracellular events through the recruitment of GRB2. The sequence is that of Linker for activation of T-cells family member 2 (Lat2) from Mus musculus (Mouse).